The following is a 265-amino-acid chain: Hydroxyethylthiazole kinase (265 aa).

A substrate-binding site is contributed by methionine 43. The ATP site is built by lysine 118 and threonine 165. Position 192 (glycine 192) interacts with substrate.

The protein belongs to the Thz kinase family. It depends on Mg(2+) as a cofactor.

It catalyses the reaction 5-(2-hydroxyethyl)-4-methylthiazole + ATP = 4-methyl-5-(2-phosphooxyethyl)-thiazole + ADP + H(+). Its pathway is cofactor biosynthesis; thiamine diphosphate biosynthesis; 4-methyl-5-(2-phosphoethyl)-thiazole from 5-(2-hydroxyethyl)-4-methylthiazole: step 1/1. In terms of biological role, catalyzes the phosphorylation of the hydroxyl group of 4-methyl-5-beta-hydroxyethylthiazole (THZ). This Pyrococcus furiosus (strain ATCC 43587 / DSM 3638 / JCM 8422 / Vc1) protein is Hydroxyethylthiazole kinase.